A 195-amino-acid chain; its full sequence is Probable GTP-binding protein EngB (195 aa).

Positions 24–195 (GLSEVGLSGR…QIWNVIEKYL (172 aa)) constitute an EngB-type G domain. GTP is bound by residues 32–39 (GRSNVGKS), 59–63 (GKTQT), 77–80 (DVPG), 144–147 (TKED), and 176–178 (YSS). S39 and T61 together coordinate Mg(2+).

It belongs to the TRAFAC class TrmE-Era-EngA-EngB-Septin-like GTPase superfamily. EngB GTPase family. Mg(2+) is required as a cofactor.

Functionally, necessary for normal cell division and for the maintenance of normal septation. This chain is Probable GTP-binding protein EngB, found in Staphylococcus saprophyticus subsp. saprophyticus (strain ATCC 15305 / DSM 20229 / NCIMB 8711 / NCTC 7292 / S-41).